Consider the following 130-residue polypeptide: Small ribosomal subunit protein uS8 (130 aa).

Belongs to the universal ribosomal protein uS8 family. As to quaternary structure, part of the 30S ribosomal subunit. Contacts proteins S5 and S12.

One of the primary rRNA binding proteins, it binds directly to 16S rRNA central domain where it helps coordinate assembly of the platform of the 30S subunit. This chain is Small ribosomal subunit protein uS8, found in Pectobacterium atrosepticum (strain SCRI 1043 / ATCC BAA-672) (Erwinia carotovora subsp. atroseptica).